An 813-amino-acid chain; its full sequence is Phenylalanine--tRNA ligase beta subunit (813 aa).

The region spanning 42–151 is the tRNA-binding domain; it reads AKDFNHVVIG…ADAPVGKAYA (110 aa). Positions 405–480 constitute a B5 domain; the sequence is VKKAPVDITI…RLNGYEHIPE (76 aa). Mg(2+) is bound by residues aspartate 458, aspartate 464, glutamate 467, and glutamate 468. In terms of domain architecture, FDX-ACB spans 720–813; it reads SKFPIVERDF…LKKNFDLSVR (94 aa).

It belongs to the phenylalanyl-tRNA synthetase beta subunit family. Type 1 subfamily. As to quaternary structure, tetramer of two alpha and two beta subunits. Mg(2+) is required as a cofactor.

Its subcellular location is the cytoplasm. It catalyses the reaction tRNA(Phe) + L-phenylalanine + ATP = L-phenylalanyl-tRNA(Phe) + AMP + diphosphate + H(+). This chain is Phenylalanine--tRNA ligase beta subunit, found in Bdellovibrio bacteriovorus (strain ATCC 15356 / DSM 50701 / NCIMB 9529 / HD100).